Here is a 226-residue protein sequence, read N- to C-terminus: Ribonuclease 3 (226 aa).

An RNase III domain is found at 2 to 129 (IESISKIIKY…LIGAIYLDGG (128 aa)). Position 42 (E42) interacts with Mg(2+). Residue D46 is part of the active site. Mg(2+) is bound by residues N115 and E118. E118 is a catalytic residue. Positions 154–223 (DAKTILQELV…ASLMLNQIHN (70 aa)) constitute a DRBM domain.

Belongs to the ribonuclease III family. Homodimer. Requires Mg(2+) as cofactor.

It localises to the cytoplasm. It carries out the reaction Endonucleolytic cleavage to 5'-phosphomonoester.. In terms of biological role, digests double-stranded RNA. Involved in the processing of primary rRNA transcript to yield the immediate precursors to the large and small rRNAs (23S and 16S). Processes some mRNAs, and tRNAs when they are encoded in the rRNA operon. Processes pre-crRNA and tracrRNA of type II CRISPR loci if present in the organism. The chain is Ribonuclease 3 from Ehrlichia chaffeensis (strain ATCC CRL-10679 / Arkansas).